An 875-amino-acid polypeptide reads, in one-letter code: Neurotrypsin (875 aa).

Residues M1–G20 form the signal peptide. N-linked (GlcNAc...) asparagine glycosylation occurs at N26. The disordered stretch occupies residues H30–R87. Over residues T56–A71 the composition is skewed to pro residues. Residues C93–C165 form the Kringle domain. Disulfide bonds link C93-C165, C109-C149, C138-C163, C195-C259, C208-C269, C239-C249, C305-C369, C318-C379, C349-C359, C412-C475, C425-C485, C455-C465, C525-C589, C538-C599, C569-C579, C619-C750, C661-C677, C765-C831, C794-C808, and C821-C850. SRCR domains lie at V170–F271, I280–P381, I387–P487, and V500–Y601. The tract at residues C619–R630 is zymogen activation region. The region spanning I631–K874 is the Peptidase S1 domain. H676 acts as the Charge relay system in catalysis. N683 is a glycosylation site (N-linked (GlcNAc...) asparagine). D726 acts as the Charge relay system in catalysis. S825 serves as the catalytic Charge relay system.

Belongs to the peptidase S1 family.

The protein resides in the secreted. Its function is as follows. Plays a role in neuronal plasticity and the proteolytic action may subserve structural reorganizations associated with learning and memory operations. The protein is Neurotrypsin (PRSS12) of Macaca mulatta (Rhesus macaque).